Reading from the N-terminus, the 460-residue chain is Argininosuccinate lyase (460 aa).

It belongs to the lyase 1 family. Argininosuccinate lyase subfamily.

The protein resides in the cytoplasm. The enzyme catalyses 2-(N(omega)-L-arginino)succinate = fumarate + L-arginine. Its pathway is amino-acid biosynthesis; L-arginine biosynthesis; L-arginine from L-ornithine and carbamoyl phosphate: step 3/3. The chain is Argininosuccinate lyase from Alteromonas mediterranea (strain DSM 17117 / CIP 110805 / LMG 28347 / Deep ecotype).